The primary structure comprises 502 residues: ATP synthase subunit beta, chloroplastic (502 aa).

At Ser17 the chain carries Phosphoserine. 176 to 183 (GGAGVGKT) lines the ATP pocket.

Belongs to the ATPase alpha/beta chains family. In terms of assembly, F-type ATPases have 2 components, CF(1) - the catalytic core - and CF(0) - the membrane proton channel. CF(1) has five subunits: alpha(3), beta(3), gamma(1), delta(1), epsilon(1). CF(0) has four main subunits: a(1), b(1), b'(1) and c(9-12).

The protein localises to the plastid. It localises to the chloroplast thylakoid membrane. The catalysed reaction is ATP + H2O + 4 H(+)(in) = ADP + phosphate + 5 H(+)(out). Functionally, produces ATP from ADP in the presence of a proton gradient across the membrane. The catalytic sites are hosted primarily by the beta subunits. The polypeptide is ATP synthase subunit beta, chloroplastic (Lepidium virginicum (Virginia pepperweed)).